Consider the following 543-residue polypeptide: Glutamyl-tRNA(Gln) amidotransferase subunit B-1, chloroplastic/mitochondrial (543 aa).

A disordered region spans residues Met1 to Thr47. A compositionally biased stretch (basic residues) spans Arg12–Arg23.

It belongs to the GatB/GatE family. GatB subfamily. As to quaternary structure, subunit of the heterotrimeric GatCAB amidotransferase (AdT) complex, composed of A, B and C subunits.

The protein localises to the mitochondrion. The protein resides in the plastid. Its subcellular location is the chloroplast. It carries out the reaction L-glutamyl-tRNA(Gln) + L-glutamine + ATP + H2O = L-glutaminyl-tRNA(Gln) + L-glutamate + ADP + phosphate + H(+). Its function is as follows. Allows the formation of correctly charged Gln-tRNA(Gln) through the transamidation of misacylated Glu-tRNA(Gln) in chloroplasts and mitochondria. The reaction takes place in the presence of glutamine and ATP through an activated gamma-phospho-Glu-tRNA(Gln). The polypeptide is Glutamyl-tRNA(Gln) amidotransferase subunit B-1, chloroplastic/mitochondrial (Micromonas commoda (strain RCC299 / NOUM17 / CCMP2709) (Picoplanktonic green alga)).